Consider the following 161-residue polypeptide: uncharacterized protein (161 aa).

The chain crosses the membrane as a helical span at residues 76-94; it reads ISISSQCIFNVVILSFVFT.

The protein localises to the membrane. This is an uncharacterized protein from Saccharomyces cerevisiae (strain ATCC 204508 / S288c) (Baker's yeast).